The primary structure comprises 347 residues: F-box/kelch-repeat protein At5g03020 (347 aa).

A disordered region spans residues methionine 1–proline 21. The F-box domain occupies proline 14 to phenylalanine 62. 2 Kelch repeats span residues glutamine 119–glycine 165 and isoleucine 167–histidine 215.

The polypeptide is F-box/kelch-repeat protein At5g03020 (Arabidopsis thaliana (Mouse-ear cress)).